Reading from the N-terminus, the 98-residue chain is NADH-ubiquinone oxidoreductase chain 4L (98 aa).

3 helical membrane-spanning segments follow: residues 1-21, 29-49, and 61-81; these read MSLVYMNIIMAFTTSLVGLLM, SLLCLEGMMLSLFIMATLIIL, and IILLVFAACEAALGLSLLVMV.

Belongs to the complex I subunit 4L family. In terms of assembly, core subunit of respiratory chain NADH dehydrogenase (Complex I) which is composed of 45 different subunits.

The protein localises to the mitochondrion inner membrane. The catalysed reaction is a ubiquinone + NADH + 5 H(+)(in) = a ubiquinol + NAD(+) + 4 H(+)(out). Its function is as follows. Core subunit of the mitochondrial membrane respiratory chain NADH dehydrogenase (Complex I) which catalyzes electron transfer from NADH through the respiratory chain, using ubiquinone as an electron acceptor. Part of the enzyme membrane arm which is embedded in the lipid bilayer and involved in proton translocation. The sequence is that of NADH-ubiquinone oxidoreductase chain 4L (MT-ND4L) from Hippopotamus amphibius (Hippopotamus).